Reading from the N-terminus, the 496-residue chain is Proline--tRNA ligase (496 aa).

This sequence belongs to the class-II aminoacyl-tRNA synthetase family. ProS type 3 subfamily. Homodimer.

It localises to the cytoplasm. It carries out the reaction tRNA(Pro) + L-proline + ATP = L-prolyl-tRNA(Pro) + AMP + diphosphate. Catalyzes the attachment of proline to tRNA(Pro) in a two-step reaction: proline is first activated by ATP to form Pro-AMP and then transferred to the acceptor end of tRNA(Pro). The protein is Proline--tRNA ligase of Phocaeicola vulgatus (strain ATCC 8482 / DSM 1447 / JCM 5826 / CCUG 4940 / NBRC 14291 / NCTC 11154) (Bacteroides vulgatus).